The chain runs to 442 residues: Proline--tRNA ligase (442 aa).

This sequence belongs to the class-II aminoacyl-tRNA synthetase family. ProS type 2 subfamily. As to quaternary structure, homodimer.

It localises to the cytoplasm. It catalyses the reaction tRNA(Pro) + L-proline + ATP = L-prolyl-tRNA(Pro) + AMP + diphosphate. Its function is as follows. Catalyzes the attachment of proline to tRNA(Pro) in a two-step reaction: proline is first activated by ATP to form Pro-AMP and then transferred to the acceptor end of tRNA(Pro). In Rhizobium meliloti (strain 1021) (Ensifer meliloti), this protein is Proline--tRNA ligase.